A 388-amino-acid polypeptide reads, in one-letter code: Large ribosomal subunit protein uL3B (388 aa).

The segment covering Met-1–Arg-10 has biased composition (basic and acidic residues). Residues Met-1–Lys-34 form a disordered region. The segment covering Pro-18 to Ala-31 has biased composition (basic residues).

Belongs to the universal ribosomal protein uL3 family. Component of the large ribosomal subunit (LSU). Mature yeast ribosomes consist of a small (40S) and a large (60S) subunit. The 40S small subunit contains 1 molecule of ribosomal RNA (18S rRNA) and at least 33 different proteins. The large 60S subunit contains 3 rRNA molecules (25S, 5.8S and 5S rRNA) and at least 46 different proteins. uL3 forms together with ES39L one of the contact sites for the signal recognition particle that targets ribosomes to the endoplasmic reticulum membrane.

It localises to the cytoplasm. In terms of biological role, component of the ribosome, a large ribonucleoprotein complex responsible for the synthesis of proteins in the cell. The small ribosomal subunit (SSU) binds messenger RNAs (mRNAs) and translates the encoded message by selecting cognate aminoacyl-transfer RNA (tRNA) molecules. The large subunit (LSU) contains the ribosomal catalytic site termed the peptidyl transferase center (PTC), which catalyzes the formation of peptide bonds, thereby polymerizing the amino acids delivered by tRNAs into a polypeptide chain. The nascent polypeptides leave the ribosome through a tunnel in the LSU and interact with protein factors that function in enzymatic processing, targeting, and the membrane insertion of nascent chains at the exit of the ribosomal tunnel. uL3 plays a role in coordinating processes of accommodating the aminoacyl-tRNA in the PTC. This Schizosaccharomyces pombe (strain 972 / ATCC 24843) (Fission yeast) protein is Large ribosomal subunit protein uL3B (rpl302).